A 473-amino-acid polypeptide reads, in one-letter code: Cysteine--tRNA ligase (473 aa).

Zn(2+) is bound at residue cysteine 30. Positions 32–42 (MTVYDYCHIGH) match the 'HIGH' region motif. 3 residues coordinate Zn(2+): cysteine 213, histidine 238, and glutamate 242. The 'KMSKS' region signature appears at 270–274 (KMSKS). Lysine 273 is a binding site for ATP.

This sequence belongs to the class-I aminoacyl-tRNA synthetase family. Monomer. The cofactor is Zn(2+).

The protein resides in the cytoplasm. It carries out the reaction tRNA(Cys) + L-cysteine + ATP = L-cysteinyl-tRNA(Cys) + AMP + diphosphate. The polypeptide is Cysteine--tRNA ligase (Acinetobacter baumannii (strain SDF)).